A 435-amino-acid chain; its full sequence is MNIERADFVDRVKIFVKAGDGGNGCVSFRREKYVPKGGPDGGDGGDGGFVFLRANPSVSTLIEFVNKRKFVAENGKHGMGKKMKGRNGKDLFIDVPVGTVVKDAVTGEIIADLNEPGKIVCVARGGKGGRGNAHFATSTKQAPLIAERGEKGESRWLELELKILADVGLVGYPNVGKSSLISRISNARPKIANYPFTTLIPNLGVVKYDDFSFVVADIPGLIEGASEGVGLGNVFLRHVERCYLIAHVIDVSGYEREDPVRDYFVIREEMKKYSPFLLEKPEIVVANKIDLIGKEELEKILKRLRDATDREVIPVSAVTGEGIDLLVSKLASIVREMKVEKPERKEERFVKPSPVWRRLPEKFHLEVVKEDEGYWVVEGENLRVWIERFDLNQRDARLMLLQVLEKNGLNNKLKEAGVKEGDVVRIGDFEFEYRE.

The region spanning 6-164 is the Obg domain; that stretch reads ADFVDRVKIF…RWLELELKIL (159 aa). The OBG-type G domain occupies 165–335; the sequence is ADVGLVGYPN…LVSKLASIVR (171 aa). GTP-binding positions include 171-178, 196-200, 217-220, 287-290, and 316-318; these read GYPNVGKS, FTTLI, DIPG, NKID, and SAV. Mg(2+) contacts are provided by serine 178 and threonine 198. Positions 357 to 435 constitute an OCT domain; that stretch reads RRLPEKFHLE…IGDFEFEYRE (79 aa).

This sequence belongs to the TRAFAC class OBG-HflX-like GTPase superfamily. OBG GTPase family. Monomer. Requires Mg(2+) as cofactor.

Its subcellular location is the cytoplasm. An essential GTPase which binds GTP, GDP and possibly (p)ppGpp with moderate affinity, with high nucleotide exchange rates and a fairly low GTP hydrolysis rate. Plays a role in control of the cell cycle, stress response, ribosome biogenesis and in those bacteria that undergo differentiation, in morphogenesis control. The polypeptide is GTPase Obg (Thermotoga petrophila (strain ATCC BAA-488 / DSM 13995 / JCM 10881 / RKU-1)).